A 311-amino-acid chain; its full sequence is Aspartate carbamoyltransferase catalytic subunit (311 aa).

Positions 57 and 58 each coordinate carbamoyl phosphate. An L-aspartate-binding site is contributed by lysine 86. Carbamoyl phosphate-binding residues include arginine 107, histidine 135, and glutamine 138. Residues arginine 168 and arginine 230 each contribute to the L-aspartate site. Carbamoyl phosphate contacts are provided by leucine 269 and proline 270.

This sequence belongs to the aspartate/ornithine carbamoyltransferase superfamily. ATCase family. As to quaternary structure, heterooligomer of catalytic and regulatory chains.

It carries out the reaction carbamoyl phosphate + L-aspartate = N-carbamoyl-L-aspartate + phosphate + H(+). It participates in pyrimidine metabolism; UMP biosynthesis via de novo pathway; (S)-dihydroorotate from bicarbonate: step 2/3. In terms of biological role, catalyzes the condensation of carbamoyl phosphate and aspartate to form carbamoyl aspartate and inorganic phosphate, the committed step in the de novo pyrimidine nucleotide biosynthesis pathway. The sequence is that of Aspartate carbamoyltransferase catalytic subunit from Staphylothermus marinus (strain ATCC 43588 / DSM 3639 / JCM 9404 / F1).